The sequence spans 622 residues: Basic helix-loop-helix ARNT-like protein 2 (622 aa).

Positions 1–10 are enriched in low complexity; that stretch reads MAEAGVGSAE. Disordered stretches follow at residues 1–29 and 41–86; these read MAEAGVGSAEGAEEERRAVEENFPVDGNS and PITK…EDEE. Over residues 45–54 the composition is skewed to polar residues; sequence PATTSFNNSV. The span at 67–76 shows a compositional bias: acidic residues; the sequence is DNQDTVEVDG. Residues 77-86 show a composition bias toward basic and acidic residues; it reads DPQKRNEDEE. The 54-residue stretch at 92–145 folds into the bHLH domain; it reads DFREAHSQTEKRRRDKMNNLIEELSAMIPQCNPMARKLDKLTVLRMAVQHLKSL. PAS domains are found at residues 163-235 and 342-412; these read KDDE…DVSP and VPQK…LQNK. The 44-residue stretch at 417–460 folds into the PAC domain; sequence TNSYKFRAKDGSFITLKSQWFSFMNPWTKELEYIVSNNTVVLGH.

As to quaternary structure, component of the circadian core oscillator, which includes the CRY proteins, CLOCK, or NPAS2, BMAL1 or BMAL2, CSNK1D and/or CSNK1E, TIMELESS and the PER proteins. Interacts directly with CLOCK to form the BMAL2-CLOCK transactivator. Can form heterodimers or homodimers which interact directly with CLOCK to form the transcription activator. Expressed in the pineal gland.

It is found in the nucleus. Functionally, transcriptional activator which forms a core component of the circadian clock. The circadian clock, an internal time-keeping system, regulates various physiological processes through the generation of approximately 24 hour circadian rhythms in gene expression, which are translated into rhythms in metabolism and behavior. It is derived from the Latin roots 'circa' (about) and 'diem' (day) and acts as an important regulator of a wide array of physiological functions including metabolism, sleep, body temperature, blood pressure, endocrine, immune, cardiovascular, and renal function. Consists of two major components: the central clock, residing in the suprachiasmatic nucleus (SCN) of the brain, and the peripheral clocks that are present in nearly every tissue and organ system. Both the central and peripheral clocks can be reset by environmental cues, also known as Zeitgebers (German for 'timegivers'). The predominant Zeitgeber for the central clock is light, which is sensed by retina and signals directly to the SCN. The central clock entrains the peripheral clocks through neuronal and hormonal signals, body temperature and feeding-related cues, aligning all clocks with the external light/dark cycle. Circadian rhythms allow an organism to achieve temporal homeostasis with its environment at the molecular level by regulating gene expression to create a peak of protein expression once every 24 hours to control when a particular physiological process is most active with respect to the solar day. Transcription and translation of core clock components (CLOCK, NPAS2, BMAL1, BMAL2, PER1, PER2, PER3, CRY1 and CRY2) plays a critical role in rhythm generation, whereas delays imposed by post-translational modifications (PTMs) are important for determining the period (tau) of the rhythms (tau refers to the period of a rhythm and is the length, in time, of one complete cycle). A diurnal rhythm is synchronized with the day/night cycle, while the ultradian and infradian rhythms have a period shorter and longer than 24 hours, respectively. Disruptions in the circadian rhythms contribute to the pathology of cardiovascular diseases, cancer, metabolic syndromes and aging. A transcription/translation feedback loop (TTFL) forms the core of the molecular circadian clock mechanism. Transcription factors, CLOCK or NPAS2 and BMAL1 or BMAL2, form the positive limb of the feedback loop, act in the form of a heterodimer and activate the transcription of core clock genes and clock-controlled genes (involved in key metabolic processes), harboring E-box elements (5'-CACGTG-3') within their promoters. The core clock genes: PER1/2/3 and CRY1/2 which are transcriptional repressors form the negative limb of the feedback loop and interact with the CLOCK|NPAS2-BMAL1|BMAL2 heterodimer inhibiting its activity and thereby negatively regulating their own expression. This heterodimer also activates nuclear receptors NR1D1/2 and RORA/B/G, which form a second feedback loop and which activate and repress BMAL1 transcription, respectively. The preferred binding motif for the CLOCK-BMAL1 heterodimer is 5'-CACGTGA-3', which contains a flanking adenine nucleotide at the 3-prime end of the canonical 6-nucleotide E-box sequence. CLOCK specifically binds to the half-site 5'-CAC-3', while BMAL1 binds to the half-site 5'-GTGA-3'. This chain is Basic helix-loop-helix ARNT-like protein 2 (BMAL2), found in Gallus gallus (Chicken).